We begin with the raw amino-acid sequence, 422 residues long: Probable Na(+)/H(+) antiporter 2 (422 aa).

The next 13 helical transmembrane spans lie at 3-23 (IVLF…IAKI), 28-48 (GIPD…LNVI), 52-72 (IVES…LFIG), 93-113 (ILAL…VFHL), 119-139 (IGLL…IPIF), 157-177 (VFND…LGLA), 183-203 (ILEF…AGKF), 216-236 (YIAP…EGIF), 242-262 (YEIS…NVIV), 281-301 (LSIF…SIPL), 307-327 (LPAF…GVLI), 341-361 (IYLA…AMVY), and 384-404 (LAGT…VLEA).

The protein belongs to the monovalent cation:proton antiporter 1 (CPA1) transporter (TC 2.A.36) family.

Its subcellular location is the cell membrane. In terms of biological role, this is probably a Na(+)/H(+) antiporter. This Methanocaldococcus jannaschii (strain ATCC 43067 / DSM 2661 / JAL-1 / JCM 10045 / NBRC 100440) (Methanococcus jannaschii) protein is Probable Na(+)/H(+) antiporter 2.